The primary structure comprises 269 residues: Formamidopyrimidine-DNA glycosylase (269 aa).

P2 serves as the catalytic Schiff-base intermediate with DNA. Catalysis depends on E3, which acts as the Proton donor. K57 (proton donor; for beta-elimination activity) is an active-site residue. DNA contacts are provided by H90, R109, and K150. An FPG-type zinc finger spans residues 235 to 269; sequence LVYGKAGEPCPECGEPLQELKIGQRNTFFCNECQQ. R259 acts as the Proton donor; for delta-elimination activity in catalysis.

Belongs to the FPG family. As to quaternary structure, monomer. The cofactor is Zn(2+).

It carries out the reaction Hydrolysis of DNA containing ring-opened 7-methylguanine residues, releasing 2,6-diamino-4-hydroxy-5-(N-methyl)formamidopyrimidine.. It catalyses the reaction 2'-deoxyribonucleotide-(2'-deoxyribose 5'-phosphate)-2'-deoxyribonucleotide-DNA = a 3'-end 2'-deoxyribonucleotide-(2,3-dehydro-2,3-deoxyribose 5'-phosphate)-DNA + a 5'-end 5'-phospho-2'-deoxyribonucleoside-DNA + H(+). Involved in base excision repair of DNA damaged by oxidation or by mutagenic agents. Acts as a DNA glycosylase that recognizes and removes damaged bases. Has a preference for oxidized purines, such as 7,8-dihydro-8-oxoguanine (8-oxoG). Has AP (apurinic/apyrimidinic) lyase activity and introduces nicks in the DNA strand. Cleaves the DNA backbone by beta-delta elimination to generate a single-strand break at the site of the removed base with both 3'- and 5'-phosphates. The protein is Formamidopyrimidine-DNA glycosylase of Vibrio parahaemolyticus serotype O3:K6 (strain RIMD 2210633).